A 407-amino-acid chain; its full sequence is Protein ZNF365 (407 aa).

Ser16 is subject to Phosphoserine. A C2H2-type; degenerate zinc finger spans residues 26-51; sequence LRCPRCGDHTRFRSLSSLRAHLEFSH. Ser138 is subject to Phosphoserine. Positions 169 to 297 form a coiled coil; it reads VEAVDRTIEK…QLEYYQSQQA (129 aa). Residue Thr175 is modified to Phosphothreonine. The segment at 347-392 is disordered; sequence LKKAKDDRASMQPAKAIHEQAESSRDLCRPPKKGELLGFGRKGNIR. The segment covering 362 to 381 has biased composition (basic and acidic residues); that stretch reads AIHEQAESSRDLCRPPKKGE. At Ser369 the chain carries Phosphoserine.

In terms of assembly, homodimer. Interacts with NDE1 and NDEL1. Does not interact with TUBG1. Interacts with DISC1. Interacts with PARP1. Interacts with MCRS1. Isoform 1 is expressed in brain. Isoform 2 is expressed in placenta and at low level in lung and liver. Isoform 3 is expressed in kidney and pancreas. Isoform 1 is expressed exclusively in brain.

The protein localises to the cytoplasm. The protein resides in the cytoskeleton. It is found in the microtubule organizing center. Its subcellular location is the centrosome. Involved in the regulation of neurogenesis. Negatively regulates neurite outgrowth. Involved in the morphogenesis of basket cells in the somatosensory cortex during embryogenesis. Involved in the positive regulation of oligodendrocyte differentiation during postnatal growth. Involved in dendritic arborization, morphogenesis of spine density dendrite, and establishment of postsynaptic dendrite density in cortical pyramidal neurons. Involved in homologous recombination (HR) repair pathway. Required for proper resolution of DNA double-strand breaks (DSBs) by HR. Is required for recovery of stalled replication forks, and directly contributes to genomic stability. Interacts with PARP1 and mediates MRE11-dependent DNA end resection during replication fork recovery. Contributes to genomic stability by preventing telomere dysfunction. The chain is Protein ZNF365 (ZNF365) from Homo sapiens (Human).